The following is a 115-amino-acid chain: U3-lycotoxin-Ls1a (115 aa).

A signal peptide spans 1-20 (MKFVLLFGVLLVTLFSYSSA). Positions 21–44 (EMLDDFDQAVEDELLSLIEKEEAR) are excised as a propeptide. Disulfide bonds link Cys-48-Cys-63, Cys-55-Cys-72, Cys-62-Cys-87, and Cys-74-Cys-85.

Belongs to the neurotoxin 19 (CSTX) family. 01 subfamily. In terms of tissue distribution, expressed by the venom gland.

Its subcellular location is the secreted. The protein is U3-lycotoxin-Ls1a of Lycosa singoriensis (Wolf spider).